A 464-amino-acid chain; its full sequence is Protein FAM90A10 (464 aa).

3 disordered regions span residues M1–L42, V69–A373, and H415–P437. Basic and acidic residues-rich tracts occupy residues G74–G89 and N97–R114. The span at L180–L197 shows a compositional bias: low complexity.

Belongs to the FAM90 family.

The sequence is that of Protein FAM90A10 (FAM90A10) from Homo sapiens (Human).